Here is a 720-residue protein sequence, read N- to C-terminus: Phosphoribosylformylglycinamidine synthase subunit PurL (720 aa).

H34 is an active-site residue. Y37 provides a ligand contact to ATP. Mg(2+) is bound at residue E83. Substrate contacts are provided by residues 84 to 87 (SHNH) and R106. H85 acts as the Proton acceptor in catalysis. Mg(2+) is bound at residue D107. Residue Q231 coordinates substrate. Residue D259 coordinates Mg(2+). 303-305 (ESQ) is a substrate binding site. ATP is bound by residues D480 and G517. Position 518 (N518) interacts with Mg(2+). S520 lines the substrate pocket.

It belongs to the FGAMS family. In terms of assembly, monomer. Part of the FGAM synthase complex composed of 1 PurL, 1 PurQ and 2 PurS subunits.

It localises to the cytoplasm. The enzyme catalyses N(2)-formyl-N(1)-(5-phospho-beta-D-ribosyl)glycinamide + L-glutamine + ATP + H2O = 2-formamido-N(1)-(5-O-phospho-beta-D-ribosyl)acetamidine + L-glutamate + ADP + phosphate + H(+). Its pathway is purine metabolism; IMP biosynthesis via de novo pathway; 5-amino-1-(5-phospho-D-ribosyl)imidazole from N(2)-formyl-N(1)-(5-phospho-D-ribosyl)glycinamide: step 1/2. Functionally, part of the phosphoribosylformylglycinamidine synthase complex involved in the purines biosynthetic pathway. Catalyzes the ATP-dependent conversion of formylglycinamide ribonucleotide (FGAR) and glutamine to yield formylglycinamidine ribonucleotide (FGAM) and glutamate. The FGAM synthase complex is composed of three subunits. PurQ produces an ammonia molecule by converting glutamine to glutamate. PurL transfers the ammonia molecule to FGAR to form FGAM in an ATP-dependent manner. PurS interacts with PurQ and PurL and is thought to assist in the transfer of the ammonia molecule from PurQ to PurL. This is Phosphoribosylformylglycinamidine synthase subunit PurL from Haloarcula marismortui (strain ATCC 43049 / DSM 3752 / JCM 8966 / VKM B-1809) (Halobacterium marismortui).